Consider the following 435-residue polypeptide: Probable exopolygalacturonase X (435 aa).

A signal peptide spans methionine 1–alanine 22. The interval cysteine 31–histidine 55 is disordered. The span at serine 45–histidine 55 shows a compositional bias: basic and acidic residues. N-linked (GlcNAc...) asparagine glycans are attached at residues asparagine 93, asparagine 112, asparagine 128, and asparagine 198. 2 PbH1 repeats span residues serine 199–arginine 229 and serine 230–proline 251. Aspartate 244 serves as the catalytic Proton donor. An intrachain disulfide couples cysteine 246 to cysteine 263. N-linked (GlcNAc...) asparagine glycans are attached at residues asparagine 252 and asparagine 264. One copy of the PbH1 3 repeat lies at serine 253–serine 273. The active site involves histidine 267. Residues asparagine 291, asparagine 296, asparagine 328, and asparagine 353 are each glycosylated (N-linked (GlcNAc...) asparagine). Residues valine 326–glutamine 347 form a PbH1 4 repeat. A PbH1 5 repeat occupies proline 361–serine 409. The cysteines at positions 391 and 397 are disulfide-linked. N-linked (GlcNAc...) asparagine glycans are attached at residues asparagine 406 and asparagine 429.

This sequence belongs to the glycosyl hydrolase 28 family.

The protein localises to the secreted. It catalyses the reaction [(1-&gt;4)-alpha-D-galacturonosyl](n) + H2O = alpha-D-galacturonate + [(1-&gt;4)-alpha-D-galacturonosyl](n-1). Functionally, specific in hydrolyzing the terminal glycosidic bond of polygalacturonic acid and oligogalacturonates. The sequence is that of Probable exopolygalacturonase X (pgaX) from Aspergillus niger (strain ATCC MYA-4892 / CBS 513.88 / FGSC A1513).